The primary structure comprises 101 residues: MAKTSAVEKNKRREKLVKRHADKRARLKAIVMDQGLPLEERFRATIRLAELPRNSSKVRIRNRCEVSGRPRGYYRKLKMSRIALRQLGSLGQIPGIVKSSW.

The protein belongs to the universal ribosomal protein uS14 family. In terms of assembly, part of the 30S ribosomal subunit. Contacts proteins S3 and S10.

Functionally, binds 16S rRNA, required for the assembly of 30S particles and may also be responsible for determining the conformation of the 16S rRNA at the A site. This is Small ribosomal subunit protein uS14 from Brucella anthropi (strain ATCC 49188 / DSM 6882 / CCUG 24695 / JCM 21032 / LMG 3331 / NBRC 15819 / NCTC 12168 / Alc 37) (Ochrobactrum anthropi).